The primary structure comprises 415 residues: Alpha-N-acetylgalactosaminidase (415 aa).

An N-terminal signal peptide occupies residues 1–17 (MLQKTVLLLALVAQVLM). 3 disulfide bridges follow: Cys-38–Cys-80, Cys-42–Cys-49, and Cys-127–Cys-158. Substrate is bound by residues 78-79 (DD) and Lys-154. The active-site Nucleophile is the Asp-156. Residue Asn-177 is glycosylated (N-linked (GlcNAc...) asparagine). Residues Cys-187 and Cys-209 are joined by a disulfide bond. Ser-188 lines the substrate pocket. An N-linked (GlcNAc...) asparagine glycan is attached at Asn-201. Substrate-binding residues include Arg-213 and Asp-217. The Proton donor role is filled by Asp-217. Residues Ser-322 and Ser-332 each carry the phosphoserine modification. The N-linked (GlcNAc...) asparagine glycan is linked to Asn-385.

This sequence belongs to the glycosyl hydrolase 27 family. In terms of assembly, homodimer.

The protein resides in the lysosome. The enzyme catalyses Cleavage of non-reducing alpha-(1-&gt;3)-N-acetylgalactosamine residues from human blood group A and AB mucin glycoproteins, Forssman hapten and blood group A lacto series glycolipids.. It catalyses the reaction a neolactoside IV(3)-alpha-GalNAc,IV(2)-alpha-Fuc-nLc4Cer(d18:1(4E)) + H2O = a neolactoside IV(2)-alpha-Fuc-nLc4Cer(d18:1(4E)) + N-acetyl-alpha-D-galactosamine. The catalysed reaction is a neolactoside IV(3)-alpha-GalNAc,IV(2)-alpha-Fuc-nLc4Cer(d18:0) + H2O = a neolactoside IV(2)-alpha-Fuc-nLc4Cer(d18:0) + N-acetyl-alpha-D-galactosamine. It carries out the reaction a globoside IV3GalNAc-Gb4Cer + H2O = N-acetyl-alpha-D-galactosamine + a globoside Gb4Cer. Its function is as follows. Removes terminal alpha-N-acetylgalactosamine residues from glycolipids and glycopeptides. Required for the breakdown of glycolipids. This is Alpha-N-acetylgalactosaminidase (Naga) from Mus musculus (Mouse).